A 501-amino-acid polypeptide reads, in one-letter code: Probable malate:quinone oxidoreductase (501 aa).

Belongs to the MQO family. The cofactor is FAD.

It catalyses the reaction (S)-malate + a quinone = a quinol + oxaloacetate. It participates in carbohydrate metabolism; tricarboxylic acid cycle; oxaloacetate from (S)-malate (quinone route): step 1/1. In Mycolicibacterium paratuberculosis (strain ATCC BAA-968 / K-10) (Mycobacterium paratuberculosis), this protein is Probable malate:quinone oxidoreductase.